A 726-amino-acid chain; its full sequence is L-lysine 6-oxidase (726 aa).

A cross-link (4'-cysteinyl-tryptophylquinone (Cys-Trp)) is located at residues 516–581; that stretch reads CTIQTVNFSE…LPPAYYSYWW (66 aa). Tryptophan 581 is modified (tryptophylquinone).

As to quaternary structure, homotetramer. Cysteine tryptophylquinone residue serves as cofactor. The cysteine tryptophylquinone (CTQ) is generated by oxidation of the indole ring of a tryptophan residue to form tryptophylquinone, followed by covalent cross-linking with a cysteine residue.

It localises to the secreted. It catalyses the reaction L-lysine + O2 + H2O = (S)-2-amino-6-oxohexanoate + H2O2 + NH4(+). Inhibited by aminoguanidine, amiloride and beta-aminopropionitrile. Has antibacterial activity against a wide spectrum of Gram-positive and Gram-negative bacteria including nosocomial isolates of S.aureus and Pseudomonas sp. The antimicrobial activity is due to hydrogen peroxide generated by its lysine oxidase activity. Also has autotoxic activity. Involved in biofilm differentiation; responsible for cell death within microcolonies during biofilm development which is linked to the generation of a phenotypically diverse dispersal population and thus may play a role in colonization. This Marinomonas mediterranea (strain ATCC 700492 / JCM 21426 / NBRC 103028 / MMB-1) protein is L-lysine 6-oxidase (lodA).